The chain runs to 619 residues: Very-long-chain aldehyde decarbonylase GL1-4 (619 aa).

The next 5 membrane-spanning stretches (helical) occupy residues 45–65 (IAFSLILPSLLLRMIHNQIWI), 94–114 (GWDDQILFNGLVFYAGYLAMP), 126–146 (GAVVTALVHTGPVEFLYYWFH), 178–198 (FAEHVVYFILFAIPILSTIYL), and 325–345 (AWYMWTLWPLAWLSMVLAWIY). The Fatty acid hydroxylase domain occupies 138–272 (VEFLYYWFHR…MPFYDYIYNT (135 aa)).

It belongs to the sterol desaturase family. In terms of assembly, homodimer. In terms of tissue distribution, expressed ubiquitously at low levels, with higher accumulation in developing panicles, shoots and flag leaves.

The protein localises to the endoplasmic reticulum membrane. The enzyme catalyses a long-chain fatty aldehyde + 2 NADPH + O2 + H(+) = a long-chain alkane + formate + 2 NADP(+) + H2O. Its function is as follows. Aldehyde decarbonylase involved in the conversion of aldehydes to alkanes. Core component of a very-long-chain alkane synthesis complex. This chain is Very-long-chain aldehyde decarbonylase GL1-4, found in Oryza sativa subsp. japonica (Rice).